The following is a 369-amino-acid chain: Tyrosyl-DNA phosphodiesterase 2 (369 aa).

The span at 1–17 (MELEARAEPRSPRAGRG) shows a compositional bias: basic and acidic residues. 2 disordered regions span residues 1–26 (MELE…EDEE) and 80–117 (AAAA…QQDD). Residues 99–112 (DDTASNTSSSGADS) show a composition bias toward low complexity. The tract at residues 127-131 (NIDGL) is interaction with 5' end of substrate DNA. The Mg(2+) site is built by aspartate 129 and glutamate 159. The segment at 233 to 238 (HLESTR) is interaction with 5' end of substrate DNA. Residue aspartate 269 is the Proton donor/acceptor of the active site. Residues 271–273 (NLR) form an interaction with 5' end of substrate DNA region.

This sequence belongs to the CCR4/nocturin family. TTRAP/TDP2 subfamily. It depends on Mg(2+) as a cofactor. Mn(2+) is required as a cofactor.

The protein resides in the nucleus. It is found in the PML body. Functionally, DNA repair enzyme that can remove a variety of covalent adducts from DNA through hydrolysis of a 5'-phosphodiester bond, giving rise to DNA with a free 5' phosphate. Catalyzes the hydrolysis of dead-end complexes between DNA and the topoisomerase 2 (TOP2) active site tyrosine residue. Hydrolyzes 5'-phosphoglycolates on protruding 5' ends on DNA double-strand breaks (DSBs) due to DNA damage by radiation and free radicals. The 5'-tyrosyl DNA phosphodiesterase activity can enable the repair of TOP2-induced DSBs without the need for nuclease activity, creating a 'clean' DSB with 5'-phosphate termini that are ready for ligation. Also has 3'-tyrosyl DNA phosphodiesterase activity, but less efficiently and much slower than TDP1. In Gallus gallus (Chicken), this protein is Tyrosyl-DNA phosphodiesterase 2 (TDP2).